Here is a 214-residue protein sequence, read N- to C-terminus: Octanoyltransferase (214 aa).

The BPL/LPL catalytic domain maps to Lys-31 to Tyr-206. Residues Arg-70–His-77, Ser-137–Gly-139, and Gly-150–Ala-152 each bind substrate. Cys-168 functions as the Acyl-thioester intermediate in the catalytic mechanism.

The protein belongs to the LipB family.

The protein localises to the cytoplasm. The enzyme catalyses octanoyl-[ACP] + L-lysyl-[protein] = N(6)-octanoyl-L-lysyl-[protein] + holo-[ACP] + H(+). It participates in protein modification; protein lipoylation via endogenous pathway; protein N(6)-(lipoyl)lysine from octanoyl-[acyl-carrier-protein]: step 1/2. In terms of biological role, catalyzes the transfer of endogenously produced octanoic acid from octanoyl-acyl-carrier-protein onto the lipoyl domains of lipoate-dependent enzymes. Lipoyl-ACP can also act as a substrate although octanoyl-ACP is likely to be the physiological substrate. This is Octanoyltransferase from Marinomonas sp. (strain MWYL1).